The following is a 153-amino-acid chain: Small ribosomal subunit protein bS16 (153 aa).

A disordered region spans residues 130 to 153 (EAEAAAAAEEAPAEEAAEEAPAEA). A compositionally biased stretch (acidic residues) spans 140–153 (APAEEAAEEAPAEA).

Belongs to the bacterial ribosomal protein bS16 family.

This chain is Small ribosomal subunit protein bS16, found in Bifidobacterium longum (strain NCC 2705).